We begin with the raw amino-acid sequence, 878 residues long: DNA mismatch repair protein MutS (878 aa).

618 to 625 (GPNMGGKS) is an ATP binding site. 2 stretches are compositionally biased toward basic and acidic residues: residues 800 to 811 (LEEESSRQRAEP) and 863 to 878 (GADK…ARSR). 2 disordered regions span residues 800–842 (LEEE…PDEL) and 859–878 (SGEE…ARSR).

It belongs to the DNA mismatch repair MutS family.

In terms of biological role, this protein is involved in the repair of mismatches in DNA. It is possible that it carries out the mismatch recognition step. This protein has a weak ATPase activity. The sequence is that of DNA mismatch repair protein MutS from Alkalilimnicola ehrlichii (strain ATCC BAA-1101 / DSM 17681 / MLHE-1).